Consider the following 146-residue polypeptide: Sperm surface protein Sp17 (146 aa).

Basic and acidic residues predominate over residues 76–88 (EHESEKCEAEEKS). The disordered stretch occupies residues 76 to 109 (EHESEKCEAEEKSQSVTEEETPVLTIDSEDDKDK). Acidic residues predominate over residues 92 to 108 (TEEETPVLTIDSEDDKD). An IQ domain is found at 110–139 (EEMAALKIQAAFRGHLAREDVKKIRTNKAE).

Homodimer. May interact with ROPN1. In terms of processing, the N-terminus is blocked. As to expression, testis- and sperm-specific.

The protein localises to the membrane. Sperm surface zona pellucida binding protein. Helps to bind spermatozoa to the zona pellucida with high affinity. Might function in binding zona pellucida and carbohydrates. The sequence is that of Sperm surface protein Sp17 (SPA17) from Oryctolagus cuniculus (Rabbit).